A 128-amino-acid polypeptide reads, in one-letter code: Serum amyloid A-4 protein (128 aa).

The first 18 residues, M1–S18, serve as a signal peptide directing secretion. Residues S93–Y128 form a disordered region. The span at D99–R120 shows a compositional bias: basic and acidic residues.

It belongs to the SAA family. Apolipoprotein of the HDL complex.

The protein resides in the secreted. Functionally, major acute phase reactant. The chain is Serum amyloid A-4 protein from Sus scrofa (Pig).